The following is a 211-amino-acid chain: Outer-membrane lipoprotein carrier protein (211 aa).

Positions 1–24 (MRNRILVSACAALAMFAMQAPAHA) are cleaved as a signal peptide.

Belongs to the LolA family. Monomer.

It localises to the periplasm. Its function is as follows. Participates in the translocation of lipoproteins from the inner membrane to the outer membrane. Only forms a complex with a lipoprotein if the residue after the N-terminal Cys is not an aspartate (The Asp acts as a targeting signal to indicate that the lipoprotein should stay in the inner membrane). This Cupriavidus taiwanensis (strain DSM 17343 / BCRC 17206 / CCUG 44338 / CIP 107171 / LMG 19424 / R1) (Ralstonia taiwanensis (strain LMG 19424)) protein is Outer-membrane lipoprotein carrier protein.